Here is a 172-residue protein sequence, read N- to C-terminus: MVDKRESYTKEDLLASGRGELFGAKGPQLPAPNMLMMDRVIKMTETGGNYDKGYVEAELDINPDLWFFGCHFIGDPVMPGCLGLDAMWQLVGFYLGWLGGEGKGRALGVGEVKFTGQVLPTAKKVTYRIHFKRIVNRRLIMGLADGEVLVDDRLIYTANDLKVGLFQDTSAF.

The active site involves histidine 71.

This sequence belongs to the thioester dehydratase family. FabA subfamily. As to quaternary structure, homodimer.

It is found in the cytoplasm. The catalysed reaction is a (3R)-hydroxyacyl-[ACP] = a (2E)-enoyl-[ACP] + H2O. The enzyme catalyses (3R)-hydroxydecanoyl-[ACP] = (2E)-decenoyl-[ACP] + H2O. It carries out the reaction (2E)-decenoyl-[ACP] = (3Z)-decenoyl-[ACP]. It participates in lipid metabolism; fatty acid biosynthesis. Necessary for the introduction of cis unsaturation into fatty acids. Catalyzes the dehydration of (3R)-3-hydroxydecanoyl-ACP to E-(2)-decenoyl-ACP and then its isomerization to Z-(3)-decenoyl-ACP. Can catalyze the dehydratase reaction for beta-hydroxyacyl-ACPs with saturated chain lengths up to 16:0, being most active on intermediate chain length. This chain is 3-hydroxydecanoyl-[acyl-carrier-protein] dehydratase, found in Klebsiella pneumoniae subsp. pneumoniae (strain ATCC 700721 / MGH 78578).